The chain runs to 301 residues: Probable alpha-L-glutamate ligase 1 (301 aa).

Positions 104-287 (LQLLSRKGIG…VTEPIVEYIE (184 aa)) constitute an ATP-grasp domain. Residues lysine 141, 178 to 179 (EY), aspartate 187, and 211 to 213 (RSN) contribute to the ATP site. Residues aspartate 248, glutamate 260, and asparagine 262 each contribute to the Mg(2+) site. Mn(2+) is bound by residues aspartate 248, glutamate 260, and asparagine 262.

Belongs to the RimK family. Mg(2+) is required as a cofactor. The cofactor is Mn(2+).

This Shewanella baltica (strain OS155 / ATCC BAA-1091) protein is Probable alpha-L-glutamate ligase 1.